A 192-amino-acid polypeptide reads, in one-letter code: MSKPSDRINLTNQFLIAMPNMADPTFSGTVVYLCDHSERGALGLVINRPTDIDLESLFNRIDLKLEIEPLLHIPVYFGGPVQTERGFVLHEPVEGANYSSSMSVEGGLEMTTSKDVLEAVATGTGPKRFLLTLGHAGWGAGQLEEEISRNGWLTVAADPRIVFDTPAEERFEAALGLLGVSSSTLSGEAGHA.

The protein belongs to the UPF0301 (AlgH) family.

This Burkholderia multivorans (strain ATCC 17616 / 249) protein is UPF0301 protein Bmul_2524/BMULJ_00714.